The following is a 568-amino-acid chain: Dual specificity tyrosine-phosphorylation-regulated kinase 3 (568 aa).

The disordered stretch occupies residues 1-168 (MKWKEKLGDG…HGVIGGPNNG (168 aa)). Polar residues predominate over residues 77–114 (SNTVQSDGISDSEKCSPTVSQGKSSDCLNTVKSNSSSK). The region spanning 189–502 (YEVLKIIGKG…PAQALRHPWI (314 aa)) is the Protein kinase domain. ATP contacts are provided by residues 195–203 (IGKGSFGQV) and lysine 218. Residue aspartate 315 is the Proton acceptor of the active site. Position 330 is a phosphoserine (serine 330). The residue at position 349 (tyrosine 349) is a Phosphotyrosine. A Nuclear localization signal motif is present at residues 448-461 (RSRRGKKRGPPGSK).

Belongs to the protein kinase superfamily. CMGC Ser/Thr protein kinase family. MNB/DYRK subfamily. As to quaternary structure, interacts with SIRT1. Requires Mg(2+) as cofactor. Protein kinase activity is activated following autophosphorylation at Tyr-349. Autophosphorylation at Ser-330 stabilizes the protein and enhances the protein kinase activity. In terms of processing, ubiquitinated at anaphase by the anaphase-promoting complex (APC/C), leading to its degradation by the proteasome.

The protein resides in the nucleus. The protein localises to the cytoplasm. It is found in the nucleus speckle. Its subcellular location is the cytoplasmic granule. It localises to the cytoskeleton. The protein resides in the microtubule organizing center. The protein localises to the centrosome. It catalyses the reaction L-seryl-[protein] + ATP = O-phospho-L-seryl-[protein] + ADP + H(+). It carries out the reaction L-threonyl-[protein] + ATP = O-phospho-L-threonyl-[protein] + ADP + H(+). The catalysed reaction is L-tyrosyl-[protein] + ATP = O-phospho-L-tyrosyl-[protein] + ADP + H(+). Its activity is regulated as follows. Protein kinase activity is activated following autophosphorylation at Tyr-349. Dual-specificity protein kinase that promotes disassembly of several types of membraneless organelles during mitosis, such as stress granules, nuclear speckles and pericentriolar material. Dual-specificity tyrosine-regulated kinases (DYRKs) autophosphorylate a critical tyrosine residue in their activation loop and phosphorylate their substrate on serine and threonine residues. Acts as a central dissolvase of membraneless organelles during the G2-to-M transition, after the nuclear-envelope breakdown: acts by mediating phosphorylation of multiple serine and threonine residues in unstructured domains of proteins, such as SRRM1 and PCM1. Does not mediate disassembly of all membraneless organelles: disassembly of P-body and nucleolus is not regulated by DYRK3. Dissolution of membraneless organelles at the onset of mitosis is also required to release mitotic regulators, such as ZNF207, from liquid-unmixed organelles where they are sequestered and keep them dissolved during mitosis. Regulates mTORC1 by mediating the dissolution of stress granules: during stressful conditions, DYRK3 partitions from the cytosol to the stress granule, together with mTORC1 components, which prevents mTORC1 signaling. When stress signals are gone, the kinase activity of DYRK3 is required for the dissolution of stress granule and mTORC1 relocation to the cytosol: acts by mediating the phosphorylation of the mTORC1 inhibitor AKT1S1, allowing full reactivation of mTORC1 signaling. Also acts as a negative regulator of EPO-dependent erythropoiesis: may place an upper limit on red cell production during stress erythropoiesis. Inhibits cell death due to cytokine withdrawal in hematopoietic progenitor cells. Promotes cell survival upon genotoxic stress through phosphorylation of SIRT1: this in turn inhibits p53/TP53 activity and apoptosis. The sequence is that of Dual specificity tyrosine-phosphorylation-regulated kinase 3 from Macaca fascicularis (Crab-eating macaque).